A 180-amino-acid chain; its full sequence is Ribosome maturation factor RimM (180 aa).

The 74-residue stretch at 104–177 (PEEFHDHQLV…RVVVDPPGGL (74 aa)) folds into the PRC barrel domain.

Belongs to the RimM family. In terms of assembly, binds ribosomal protein uS19.

Its subcellular location is the cytoplasm. Functionally, an accessory protein needed during the final step in the assembly of 30S ribosomal subunit, possibly for assembly of the head region. Essential for efficient processing of 16S rRNA. May be needed both before and after RbfA during the maturation of 16S rRNA. It has affinity for free ribosomal 30S subunits but not for 70S ribosomes. This is Ribosome maturation factor RimM from Salinispora arenicola (strain CNS-205).